A 238-amino-acid polypeptide reads, in one-letter code: Protein shisa-3 homolog (238 aa).

The first 21 residues, 1–21 (MRALLALCLLLGWLRWGPAGA), serve as a signal peptide directing secretion. Over 22–98 (QQSGEYCHGW…GITAQPVYVP (77 aa)) the chain is Lumenal. A helical membrane pass occupies residues 99–119 (FLIVGSIFIAFIILGSVVAIY). The Cytoplasmic portion of the chain corresponds to 120-238 (CCTCLRPKEP…GKSCPDFSSS (119 aa)). The tract at residues 151-173 (TSTSPRAPSRQSSTATSSSSTGG) is disordered. The segment covering 159–173 (SRQSSTATSSSSTGG) has biased composition (low complexity).

The protein belongs to the shisa family.

Its subcellular location is the endoplasmic reticulum membrane. Its function is as follows. Plays an essential role in the maturation of presomitic mesoderm cells by individual attenuation of both FGF and WNT signaling. The polypeptide is Protein shisa-3 homolog (SHISA3) (Homo sapiens (Human)).